A 448-amino-acid chain; its full sequence is tRNA modification GTPase MnmE (448 aa).

Positions 24, 81, and 120 each coordinate (6S)-5-formyl-5,6,7,8-tetrahydrofolate. The 158-residue stretch at 216 to 373 (GLNVVLVGAP…LKRTLLREAG (158 aa)) folds into the TrmE-type G domain. Asn226 is a binding site for K(+). Residues 226 to 231 (NVGKSS), 245 to 251 (TDIAGTT), and 270 to 273 (DTAG) each bind GTP. Ser230 contacts Mg(2+). The K(+) site is built by Thr245, Ile247, and Thr250. Residue Thr251 participates in Mg(2+) binding. (6S)-5-formyl-5,6,7,8-tetrahydrofolate is bound at residue Lys448.

The protein belongs to the TRAFAC class TrmE-Era-EngA-EngB-Septin-like GTPase superfamily. TrmE GTPase family. In terms of assembly, homodimer. Heterotetramer of two MnmE and two MnmG subunits. Requires K(+) as cofactor.

It is found in the cytoplasm. Its function is as follows. Exhibits a very high intrinsic GTPase hydrolysis rate. Involved in the addition of a carboxymethylaminomethyl (cmnm) group at the wobble position (U34) of certain tRNAs, forming tRNA-cmnm(5)s(2)U34. The polypeptide is tRNA modification GTPase MnmE (Neisseria meningitidis serogroup A / serotype 4A (strain DSM 15465 / Z2491)).